Here is a 113-residue protein sequence, read N- to C-terminus: MPDYLVVLQAAWIVRKARSVEDAMNIAVAEAGKKLNPDLDFVKIDVGDTACPKCNSPLKAVFMVAGVALVGLIFEMKVFNAKSPEHAAKIAKYEIGKRMPRIPLEVIEVAEIE.

The protein belongs to the UPF0212 family.

This chain is UPF0212 protein AF_0282, found in Archaeoglobus fulgidus (strain ATCC 49558 / DSM 4304 / JCM 9628 / NBRC 100126 / VC-16).